The chain runs to 126 residues: Nuclear transport factor 2B (126 aa).

Position 2 is an N-acetylserine (Ser-2). The NTF2 domain maps to 9 to 123 (VSKAFVEHYY…FYVFNDIFRL (115 aa)).

As to quaternary structure, interacts with RAN1. As to expression, expressed in roots, stems, leaves and flowers, and, at low levels, in siliques.

It localises to the cytoplasm. The protein localises to the nucleus. Its subcellular location is the nucleus envelope. Facilitates protein transport into the nucleus. Interacts with various nucleoporins and with Ran-GDP. Could be part of a multicomponent system of cytosolic factors that assemble at the pore complex during nuclear import. The sequence is that of Nuclear transport factor 2B from Arabidopsis thaliana (Mouse-ear cress).